The sequence spans 368 residues: MIGGEVSIKNVSKFFDDFQVLKNVSLDIKKGEFFSILGPSGCGKTTLLRVIAGFEGVESGDVLLDGKSILNLPPNKRPVNIIFQNYALFPHLTVFENIAFPLKLKKLSENEINQRVNELLSLIRMEEHAQKMPSQLSGGQKQRVAIARALANEPRVLLLDEPLSALDAKLRQELLVELDNLHDRVGITFIYVTHDQAEAISVSDRVALMNEGEIVQVGTPYEVYESPVNVFAATFIGETNLMKAEVVEVEDEYYVVESPGIGQFRCYRDKEAKKGDRLLITLRPEKIRISRKQFRSEETFNVFHGVVDEEIYMGHQTKYFVRLDEGYIMKVYKQHARYILDEPIIKWEDEVFITWNPDDSFIVEVLEE.

The region spanning 6-236 (VSIKNVSKFF…PVNVFAATFI (231 aa)) is the ABC transporter domain. 38–45 (GPSGCGKT) provides a ligand contact to ATP.

Belongs to the ABC transporter superfamily. Spermidine/putrescine importer (TC 3.A.1.11.1) family. The complex is composed of two ATP-binding proteins (PotA), two transmembrane proteins (PotB and PotC) and a solute-binding protein (PotD).

Its subcellular location is the cell inner membrane. It carries out the reaction ATP + H2O + polyamine-[polyamine-binding protein]Side 1 = ADP + phosphate + polyamineSide 2 + [polyamine-binding protein]Side 1.. In terms of biological role, part of the ABC transporter complex PotABCD involved in spermidine/putrescine import. Responsible for energy coupling to the transport system. This chain is Spermidine/putrescine import ATP-binding protein PotA, found in Thermotoga maritima (strain ATCC 43589 / DSM 3109 / JCM 10099 / NBRC 100826 / MSB8).